The sequence spans 707 residues: MSQYTEKEPSVMDQESSKAAWPKPAGGYQTITGRRYGRRHAYVSFKPCMTRHERSLGRAGDDYEVLELDDVPKENTSGSSSLDQVHPALPNEPTVEKSETEISTCGPALNQSTESSPSIATVCHSEEVRETLESNTNLHNRTETEHTPAVCNVSSVQNGIMLVHTDSYDPDSKHDENGSLQLGAEAVEGGRHQKGLGRAVFELENGEAEIYADLSPSVPSLNGEISEAFEELDSAPLEKSSTADAELVHQNGQEFQRSSEDGVVRKRRQDDTDQGRQTENSTEDADCAPGHVEQNTSDRANHHGSSPEQVVRPKVRKVISSSQVDQEIGFNRHEAKQRSVQRWREALEVEECSSDDPIIKCDDYDGDHDCMFLTPTYSRVTQRETERNRVTSENGATASGRQESRDNAFWNACGEYYQLFDKDEDSSECSDGEWSASLPHRFSGTEKDQSSSDDSWETLPGKDENDPELQSDSSGPEEENQELSLQEGEQTSLEEGEIPWLQYNEVNESSSDEGNEPANEFAQPEAFMLDGNNNLEDDSSVSEDLDVDWSLFDGFADGLGVAEAISYVDPQFLTYMALEERLAQAMETALAHLESLAVDVEVANPPASKESIDGLPETLVLEDHTAIGQEQCCPICCSEYIKDDIATELPCHHFFHKPCVSIWLQKSGTCPVCRRHFPPAVIDASAAASSDPDPDASPANDNAEEAP.

Positions 1–10 (MSQYTEKEPS) are enriched in basic and acidic residues. Disordered regions lie at residues 1–32 (MSQY…QTIT), 72–120 (PKEN…PSIA), and 250–314 (QNGQ…VRPK). At Ser2 the chain carries N-acetylserine. 2 stretches are compositionally biased toward polar residues: residues 74-83 (ENTSGSSSLD) and 109-119 (LNQSTESSPSI). The span at 257–276 (RSSEDGVVRKRRQDDTDQGR) shows a compositional bias: basic and acidic residues. Residues 293 to 308 (EQNTSDRANHHGSSPE) show a composition bias toward polar residues. A phosphoserine mark is found at Ser306 and Ser320. Residue Ser339 is modified to Phosphoserine; by PKA. Disordered stretches follow at residues 379 to 405 (RVTQ…QESR) and 424 to 493 (EDSS…QTSL). Basic and acidic residues predominate over residues 381-390 (TQRETERNRV). Thr385 is modified (phosphothreonine; by PKA). Polar residues predominate over residues 391-401 (TSENGATASGR). Ser430 carries the phosphoserine modification. Residues 465–481 (NDPELQSDSSGPEEENQ) are compositionally biased toward acidic residues. Over residues 482–491 (ELSLQEGEQT) the composition is skewed to polar residues. Residues 530–707 (DGNNNLEDDS…PANDNAEEAP (178 aa)) are interaction with PRKAR1A, PRKAR2A and PRKAR2B. Positions 549-569 (WSLFDGFADGLGVAEAISYVD) are mediates interaction with TBC1D31. Residues 633–674 (CPICCSEYIKDDIATELPCHHFFHKPCVSIWLQKSGTCPVCR) form an RING-type; atypical zinc finger. Residues 685–701 (SAAASSDPDPDASPAND) show a composition bias toward low complexity. A disordered region spans residues 685–707 (SAAASSDPDPDASPANDNAEEAP).

As to quaternary structure, binds ubiquitin-conjugating enzymes (E2s). In vitro, interacts with the ubiquitin-conjugating enzyme, UBE2D2. The phosphorylated form interacts with PRKAR1A, PRKAR2A and PRKAR2B. Binds the catalytic subunits of cAMP-dependent protein kinase. Interacts with MFHAS1. Interacts with TBC1D31; the interaction is direct and recruits PJA2 to centrosomes.

The protein localises to the cytoplasm. Its subcellular location is the cell membrane. The protein resides in the endoplasmic reticulum membrane. It is found in the golgi apparatus membrane. It localises to the synapse. The protein localises to the postsynaptic density. Its subcellular location is the cytoskeleton. The protein resides in the microtubule organizing center. It is found in the centrosome. The enzyme catalyses S-ubiquitinyl-[E2 ubiquitin-conjugating enzyme]-L-cysteine + [acceptor protein]-L-lysine = [E2 ubiquitin-conjugating enzyme]-L-cysteine + N(6)-ubiquitinyl-[acceptor protein]-L-lysine.. It participates in protein modification; protein ubiquitination. In terms of biological role, has E2-dependent E3 ubiquitin-protein ligase activity. Responsible for ubiquitination of cAMP-dependent protein kinase type I and type II-alpha/beta regulatory subunits and for targeting them for proteasomal degradation. Essential for PKA-mediated long-term memory processes. Through the ubiquitination of MFHAS1, positively regulates the TLR2 signaling pathway that leads to the activation of the downstream p38 and JNK MAP kinases and promotes the polarization of macrophages toward the pro-inflammatory M1 phenotype. Plays a role in ciliogenesis by ubiquitinating OFD1. The chain is E3 ubiquitin-protein ligase Praja-2 (Pja2) from Mus musculus (Mouse).